Here is a 259-residue protein sequence, read N- to C-terminus: Alpha-acetolactate decarboxylase (259 aa).

It belongs to the alpha-acetolactate decarboxylase family.

It carries out the reaction (2S)-2-acetolactate + H(+) = (R)-acetoin + CO2. Its pathway is polyol metabolism; (R,R)-butane-2,3-diol biosynthesis; (R,R)-butane-2,3-diol from pyruvate: step 2/3. Its function is as follows. Converts acetolactate into acetoin, which can be excreted by the cells. This may be a mechanism for controlling the internal pH of cells in the stationary stage. The chain is Alpha-acetolactate decarboxylase (budA) from Raoultella terrigena (Klebsiella terrigena).